We begin with the raw amino-acid sequence, 241 residues long: Uridylate kinase (241 aa).

Residue 13-16 (KVSG) coordinates ATP. G55 serves as a coordination point for UMP. ATP is bound by residues G56 and R60. UMP-binding positions include D75 and 136–143 (TGNPFFTT). ATP-binding residues include T163, Q164, Y169, and D172.

This sequence belongs to the UMP kinase family. As to quaternary structure, homohexamer.

It is found in the cytoplasm. It carries out the reaction UMP + ATP = UDP + ADP. Its pathway is pyrimidine metabolism; CTP biosynthesis via de novo pathway; UDP from UMP (UMPK route): step 1/1. With respect to regulation, inhibited by UTP. Its function is as follows. Catalyzes the reversible phosphorylation of UMP to UDP. The chain is Uridylate kinase from Parvibaculum lavamentivorans (strain DS-1 / DSM 13023 / NCIMB 13966).